A 708-amino-acid chain; its full sequence is MHARQRNVGNGYRSGSIGMGMSGSRISPERPMRGHGFYGSEHQHRGFNRGYGRGRGRSKSYHNQLPPPLPPPPVQRRSSGGDVFMEAGRLATEYLVSQGVLPQTVLSSKWQNGNFRKQAGEFQSSRSQEEARMDVSAPAAEKRRYIDGYSSAGSRNSLKGRRSHRYDSDFGRSGSWSERSKAFETETGDDSVSGHQEEQPLAEDIASSVQRSASGEFMRKCEGAGDSESVLDKYNLQDEAQSKTGSSSAGKDIVQDCEISKVSEGSSSLSAGSGEMKGRSGGNGGEDENQTAIEDGSIHQRCEDASIDQQCGADESFTKSGIDLATLCKFEKVPTRTRSSLTAKGPKLYLSHNIKDTSHNSGLEEEDQTENRCETRGQSSGKADSTGDENDQVEDFALVQYIENSKCHRSNSFPSSILRDNSEKESGLELPNLHRSHSVGKVGEKRPGEGSDLEEGSKRQRDWVAVSEANERFNMFKTSGNQCDPEEEGKTSSFNKRLIDGAAGKRVSHESLVNNSTYNRTHTGRTGPGYAEEHQLFPASFKMCDLNLGGASDVNDGIKESRQAVDFDLSISSSSKSLEFGTSTRMSNGKEIEVINLDDDQEVVKSSNDPGRKQEAAPYMGIDDVPDYNERLMMVEYLDSFTPINQGTSSVPQNNNTVSLQDREGAIGNDQVPNNTDDDSIFMSLGEIPLTFLQAWDQPPARGYEKPF.

Disordered regions lie at residues 1–79, 119–301, 349–390, and 410–461; these read MHAR…RRSS, AGEF…IHQR, YLSH…GDEN, and SNSF…KRQR. Pro residues predominate over residues 65–74; that stretch reads LPPPLPPPPV. Residues 238–249 are compositionally biased toward polar residues; it reads DEAQSKTGSSSA. A compositionally biased stretch (low complexity) spans 260-274; the sequence is SKVSEGSSSLSAGSG. Polar residues predominate over residues 410-419; that stretch reads SNSFPSSILR. Positions 442–461 are enriched in basic and acidic residues; sequence VGEKRPGEGSDLEEGSKRQR.

This is an uncharacterized protein from Arabidopsis thaliana (Mouse-ear cress).